A 126-amino-acid chain; its full sequence is Major sperm protein 3 (126 aa).

The residue at position 2 (A2) is an N-acetylalanine. The MSP domain maps to 8–125; it reads DIATMPAQKV…RRKNLPIEYN (118 aa).

In terms of tissue distribution, sperm.

It localises to the cell projection. Its subcellular location is the pseudopodium. The protein localises to the cytoplasm. It is found in the cytoskeleton. In terms of biological role, central component in molecular interactions underlying sperm crawling. Forms an extensive filament system that extends from sperm villipoda, along the leading edge of the pseudopod. The protein is Major sperm protein 3 (MSP-3) of Globodera rostochiensis (Golden nematode worm).